The chain runs to 188 residues: Protein K (188 aa).

The protein is Protein K (K) of Escherichia coli.